Reading from the N-terminus, the 267-residue chain is Tryptophan synthase alpha chain (267 aa).

Catalysis depends on proton acceptor residues Glu-49 and Asp-60.

This sequence belongs to the TrpA family. In terms of assembly, tetramer of two alpha and two beta chains.

The enzyme catalyses (1S,2R)-1-C-(indol-3-yl)glycerol 3-phosphate + L-serine = D-glyceraldehyde 3-phosphate + L-tryptophan + H2O. It functions in the pathway amino-acid biosynthesis; L-tryptophan biosynthesis; L-tryptophan from chorismate: step 5/5. In terms of biological role, the alpha subunit is responsible for the aldol cleavage of indoleglycerol phosphate to indole and glyceraldehyde 3-phosphate. This is Tryptophan synthase alpha chain from Rippkaea orientalis (strain PCC 8801 / RF-1) (Cyanothece sp. (strain PCC 8801)).